The following is a 647-amino-acid chain: Putative ferric-chelate reductase 1 homolog (647 aa).

Residues 10 to 30 (WLATLVTALLAVAIWPDPGQS) form a helical membrane-spanning segment. Residues 25 to 195 (PDPGQSLPQG…AAPPLPTQSP (171 aa)) enclose the Reelin domain. N-linked (GlcNAc...) asparagine glycans are attached at residues asparagine 127 and asparagine 158. Residues 245 to 368 (TKSCTSITVV…GKYHLLVASG (124 aa)) enclose the DOMON domain. In terms of domain architecture, Cytochrome b561 spans 372-570 (KENSVGYHDI…HLIFSIGGMA (199 aa)). A helical transmembrane segment spans residues 408 to 428 (LHGAFMIAAWIGTTSLGIIFA). The heme b site is built by histidine 409 and histidine 450. Helical transmembrane passes span 452 to 472 (LLMVTTWSLTVAAYVLIWVEL), 480 to 500 (HSIIGLITVILCFIQPIGALF), 515 to 535 (GHWLGGNLAHILGIVTIFFSV), 548 to 568 (WILVSFVVVHVLVHLIFSIGG), and 616 to 636 (LLGVYGVVLILFVTVLILLVV). The heme b site is built by histidine 480 and histidine 516.

Belongs to the FRRS1 family. Requires heme b as cofactor.

It localises to the membrane. In terms of biological role, putative ferric-chelate reductases reduce Fe(3+) to Fe(2+) before its transport from the endosome to the cytoplasm. The chain is Putative ferric-chelate reductase 1 homolog from Drosophila melanogaster (Fruit fly).